Reading from the N-terminus, the 653-residue chain is Macrolide export ATP-binding/permease protein MacB (653 aa).

Positions 6–244 constitute an ABC transporter domain; it reads LALSHICREF…AAASLPADKP (239 aa). ATP is bound at residue 42–49; it reads GSSGSGKS. 4 helical membrane passes run 277 to 297, 526 to 546, 587 to 607, and 617 to 637; these read FLTM…VALG, LAFL…IGVM, LGGI…NLLL, and FSIG…GYFP.

The protein belongs to the ABC transporter superfamily. Macrolide exporter (TC 3.A.1.122) family. In terms of assembly, homodimer.

Its subcellular location is the cell inner membrane. Non-canonical ABC transporter that contains transmembrane domains (TMD), which form a pore in the inner membrane, and an ATP-binding domain (NBD), which is responsible for energy generation. Confers resistance against macrolides. This chain is Macrolide export ATP-binding/permease protein MacB, found in Bradyrhizobium diazoefficiens (strain JCM 10833 / BCRC 13528 / IAM 13628 / NBRC 14792 / USDA 110).